Consider the following 356-residue polypeptide: Nicotinate-nucleotide--dimethylbenzimidazole phosphoribosyltransferase (356 aa).

Glu-317 functions as the Proton acceptor in the catalytic mechanism.

Belongs to the CobT family. In terms of assembly, homodimer.

The enzyme catalyses 5,6-dimethylbenzimidazole + nicotinate beta-D-ribonucleotide = alpha-ribazole 5'-phosphate + nicotinate + H(+). It participates in nucleoside biosynthesis; alpha-ribazole biosynthesis; alpha-ribazole from 5,6-dimethylbenzimidazole: step 1/2. Functionally, catalyzes the synthesis of alpha-ribazole-5'-phosphate from nicotinate mononucleotide (NAMN) and 5,6-dimethylbenzimidazole (DMB). The polypeptide is Nicotinate-nucleotide--dimethylbenzimidazole phosphoribosyltransferase (Salmonella paratyphi C (strain RKS4594)).